Reading from the N-terminus, the 307-residue chain is Acetaldehyde dehydrogenase 1 (307 aa).

The Acyl-thioester intermediate role is filled by Cys-131. NAD(+)-binding positions include 162 to 170 (SIGPGTRKN) and Asn-273.

It belongs to the acetaldehyde dehydrogenase family.

It catalyses the reaction acetaldehyde + NAD(+) + CoA = acetyl-CoA + NADH + H(+). The chain is Acetaldehyde dehydrogenase 1 (salG) from Metapseudomonas furukawaii (Pseudomonas furukawaii).